Consider the following 615-residue polypeptide: Protein DlpA (615 aa).

Belongs to the isocitrate and isopropylmalate dehydrogenases family. This sequence to M.jannaschii MJ0644 in the C-terminal section.

The protein is Protein DlpA (dlpA) of Legionella pneumophila subsp. pneumophila (strain Philadelphia 1 / ATCC 33152 / DSM 7513).